The following is a 290-amino-acid chain: uncharacterized protein (290 aa).

One can recognise an HTH lysR-type domain in the interval 1 to 61 (MVMNMNHLHI…RDKHHGLMLT (61 aa)). A DNA-binding region (H-T-H motif) is located at residues 20–39 (ITEAAKELFISQPAVSKAIK).

This sequence belongs to the LysR transcriptional regulatory family.

This is an uncharacterized protein from Bacillus subtilis (strain 168).